A 526-amino-acid chain; its full sequence is Bifunctional purine biosynthesis protein PurH (526 aa).

The MGS-like domain occupies 1–145; it reads MSKAPLALLS…KNHAHVGIVT (145 aa).

It belongs to the PurH family.

It carries out the reaction (6R)-10-formyltetrahydrofolate + 5-amino-1-(5-phospho-beta-D-ribosyl)imidazole-4-carboxamide = 5-formamido-1-(5-phospho-D-ribosyl)imidazole-4-carboxamide + (6S)-5,6,7,8-tetrahydrofolate. The enzyme catalyses IMP + H2O = 5-formamido-1-(5-phospho-D-ribosyl)imidazole-4-carboxamide. It functions in the pathway purine metabolism; IMP biosynthesis via de novo pathway; 5-formamido-1-(5-phospho-D-ribosyl)imidazole-4-carboxamide from 5-amino-1-(5-phospho-D-ribosyl)imidazole-4-carboxamide (10-formyl THF route): step 1/1. The protein operates within purine metabolism; IMP biosynthesis via de novo pathway; IMP from 5-formamido-1-(5-phospho-D-ribosyl)imidazole-4-carboxamide: step 1/1. The chain is Bifunctional purine biosynthesis protein PurH from Psychrobacter arcticus (strain DSM 17307 / VKM B-2377 / 273-4).